The primary structure comprises 226 residues: Protein GrpE (226 aa).

2 disordered regions span residues 1-31 and 189-226; these read MTPN…PDTL and VSKG…PAEA. The segment covering 192 to 218 has biased composition (low complexity); the sequence is GGPKAAEASKPAGEAPKPAGEAPKPAG.

The protein belongs to the GrpE family. As to quaternary structure, homodimer.

The protein resides in the cytoplasm. Its function is as follows. Participates actively in the response to hyperosmotic and heat shock by preventing the aggregation of stress-denatured proteins, in association with DnaK and GrpE. It is the nucleotide exchange factor for DnaK and may function as a thermosensor. Unfolded proteins bind initially to DnaJ; upon interaction with the DnaJ-bound protein, DnaK hydrolyzes its bound ATP, resulting in the formation of a stable complex. GrpE releases ADP from DnaK; ATP binding to DnaK triggers the release of the substrate protein, thus completing the reaction cycle. Several rounds of ATP-dependent interactions between DnaJ, DnaK and GrpE are required for fully efficient folding. The sequence is that of Protein GrpE from Methylobacterium nodulans (strain LMG 21967 / CNCM I-2342 / ORS 2060).